The primary structure comprises 488 residues: Mannosylglycerate hydrolase MGH1 (488 aa).

Substrate-binding positions include Tyr94, 98–101 (WNWD), Tyr146, Gln167, and Gly227. The active-site Proton donor is Asp229. Substrate is bound by residues Arg262 and 415–416 (YW). Glu459 functions as the Proton acceptor in the catalytic mechanism.

It belongs to the glycosyl hydrolase 63 family.

It catalyses the reaction (2R)-2-O-(alpha-D-mannosyl)-glycerate + H2O = D-mannose + (R)-glycerate. The catalysed reaction is (2R)-2-O-(alpha-D-glucopyranosyl)-glycerate + H2O = (R)-glycerate + D-glucose. Activity is not dependent on divalent cations, but it is enhanced by Mn(2+). Catalyzes the hydrolysis of alpha-D-mannosyl-glycerate (MG) to D-glycerate and D-mannose. Can also hydrolyze alpha-D-glucopyranosyl-glycerate (GG)with lower efficiency. This chain is Mannosylglycerate hydrolase MGH1, found in Selaginella moellendorffii (Spikemoss).